The primary structure comprises 92 residues: Small ribosomal subunit protein uS17 (92 aa).

It belongs to the universal ribosomal protein uS17 family. As to quaternary structure, part of the 30S ribosomal subunit.

Functionally, one of the primary rRNA binding proteins, it binds specifically to the 5'-end of 16S ribosomal RNA. This chain is Small ribosomal subunit protein uS17, found in Cupriavidus pinatubonensis (strain JMP 134 / LMG 1197) (Cupriavidus necator (strain JMP 134)).